A 362-amino-acid polypeptide reads, in one-letter code: NAC domain-containing protein 5 (362 aa).

In terms of domain architecture, NAC spans 3–151 (NPVGFRFRPT…TYTLCKVKFK (149 aa)). A DNA-binding region spans residues 107–157 (IGEKRVLVFKNHGGSKSDWAMHEYHATFSSPNQIMTYTLCKVKFKGERREF). The tract at residues 240–266 (DDRNNHTPQKPLTGVFSDHSTDGSDSD) is disordered.

The protein localises to the nucleus. This Arabidopsis thaliana (Mouse-ear cress) protein is NAC domain-containing protein 5 (NAC005).